Reading from the N-terminus, the 667-residue chain is tRNA uridine 5-carboxymethylaminomethyl modification enzyme MnmG (667 aa).

13–18 is an FAD binding site; the sequence is GGGHAG. An NAD(+)-binding site is contributed by 280 to 294; sequence GPRYCPSVEDKINRF.

This sequence belongs to the MnmG family. In terms of assembly, homodimer. Heterotetramer of two MnmE and two MnmG subunits. Requires FAD as cofactor.

It is found in the cytoplasm. NAD-binding protein involved in the addition of a carboxymethylaminomethyl (cmnm) group at the wobble position (U34) of certain tRNAs, forming tRNA-cmnm(5)s(2)U34. The chain is tRNA uridine 5-carboxymethylaminomethyl modification enzyme MnmG from Polaromonas naphthalenivorans (strain CJ2).